The chain runs to 634 residues: BTB/POZ domain-containing protein At1g03010 (634 aa).

Residues 38–103 (SDLTVQVGSS…CYGINIEINL (66 aa)) form the BTB domain. The NPH3 domain maps to 205 to 503 (DWWGKSLAVL…VQVLYFEQIR (299 aa)). Position 444 is a phosphotyrosine (Tyr444). Positions 542 to 580 (RDNYASVRRENRELKLEVARMRMRLTDLEKDHISIKQEL) form a coiled coil.

Belongs to the NPH3 family.

It functions in the pathway protein modification; protein ubiquitination. May act as a substrate-specific adapter of an E3 ubiquitin-protein ligase complex (CUL3-RBX1-BTB) which mediates the ubiquitination and subsequent proteasomal degradation of target proteins. The protein is BTB/POZ domain-containing protein At1g03010 of Arabidopsis thaliana (Mouse-ear cress).